The sequence spans 239 residues: Ribonuclease 3 (239 aa).

In terms of domain architecture, RNase III spans 11–133 (HAAIQKKLGY…MFAAVSFDAD (123 aa)). E46 contributes to the Mg(2+) binding site. D50 is an active-site residue. Residues D119 and E122 each coordinate Mg(2+). E122 is a catalytic residue. Residues 160 to 230 (DGKTALQEAL…AKEALKWLEE (71 aa)) form the DRBM domain.

Belongs to the ribonuclease III family. As to quaternary structure, homodimer. Requires Mg(2+) as cofactor.

It is found in the cytoplasm. The catalysed reaction is Endonucleolytic cleavage to 5'-phosphomonoester.. Functionally, digests double-stranded RNA. Involved in the processing of primary rRNA transcript to yield the immediate precursors to the large and small rRNAs (23S and 16S). Also processes some mRNAs, and tRNAs when they are encoded in the rRNA operon. CRISPR (clustered regularly interspaced short palindromic repeat) is an adaptive immune system that provides protection against mobile genetic elements (viruses, transposable elements and conjugative plasmids). CRISPR clusters contain spacers, sequences complementary to antecedent mobile elements, and target invading nucleic acids. CRISPR clusters are transcribed and processed into CRISPR RNA (crRNA). In this organism endogenous ribonuclease 3 and Cas9 are required for correct coprocessing of pre-crRNA and the trans-encoded small RNA (tracrRNA). Cas9, crRNA and tracrRNA are required for cleavage of invading DNA. Complements pre-crRNA and tracrRNA coprocessing defects in an rnc deletion in S.pyogenes strain 370. In Neisseria meningitidis serogroup A / serotype 4A (strain DSM 15465 / Z2491), this protein is Ribonuclease 3.